Consider the following 128-residue polypeptide: Large ribosomal subunit protein bL12 (128 aa).

It belongs to the bacterial ribosomal protein bL12 family. In terms of assembly, homodimer. Part of the ribosomal stalk of the 50S ribosomal subunit. Forms a multimeric L10(L12)X complex, where L10 forms an elongated spine to which 2 to 4 L12 dimers bind in a sequential fashion. Binds GTP-bound translation factors.

In terms of biological role, forms part of the ribosomal stalk which helps the ribosome interact with GTP-bound translation factors. Is thus essential for accurate translation. The protein is Large ribosomal subunit protein bL12 of Aquifex aeolicus (strain VF5).